The following is a 492-amino-acid chain: Citrate synthase, peroxisomal (492 aa).

Active-site residues include histidine 307, histidine 346, and aspartate 402. The disordered stretch occupies residues 469-492 (PAKVRSQDSYSSATTKRYSKVTSH). Residues 475–484 (QDSYSSATTK) show a composition bias toward polar residues.

This sequence belongs to the citrate synthase family.

It is found in the peroxisome. The enzyme catalyses oxaloacetate + acetyl-CoA + H2O = citrate + CoA + H(+). Its pathway is carbohydrate metabolism; tricarboxylic acid cycle; isocitrate from oxaloacetate: step 1/2. Peroxisomal protein involved in the cellular biosynthesis of citrate, and required primarily for cell growth and modulation of multicellular development. The chain is Citrate synthase, peroxisomal (cshA) from Dictyostelium discoideum (Social amoeba).